Consider the following 180-residue polypeptide: Hypoxanthine-guanine phosphoribosyltransferase (180 aa).

Residues K43 and G44 each coordinate diphosphate. Residues E99 and D100 each contribute to the Mg(2+) site. Residue D103 is the Proton acceptor of the active site. GMP-binding positions include K131, 152 to 153, and D159; that span reads FI. R165 provides a ligand contact to diphosphate.

It belongs to the purine/pyrimidine phosphoribosyltransferase family. It depends on Mg(2+) as a cofactor.

Its subcellular location is the cytoplasm. The catalysed reaction is IMP + diphosphate = hypoxanthine + 5-phospho-alpha-D-ribose 1-diphosphate. It carries out the reaction GMP + diphosphate = guanine + 5-phospho-alpha-D-ribose 1-diphosphate. It participates in purine metabolism; IMP biosynthesis via salvage pathway; IMP from hypoxanthine: step 1/1. It functions in the pathway purine metabolism; GMP biosynthesis via salvage pathway; GMP from guanine: step 1/1. Its function is as follows. Purine salvage pathway enzyme that catalyzes the transfer of the ribosyl-5-phosphate group from 5-phospho-alpha-D-ribose 1-diphosphate (PRPP) to the N9 position of the 6-oxopurines hypoxanthine and guanine to form the corresponding ribonucleotides IMP (inosine 5'-monophosphate) and GMP (guanosine 5'-monophosphate), with the release of PPi. This Streptococcus mutans serotype c (strain ATCC 700610 / UA159) protein is Hypoxanthine-guanine phosphoribosyltransferase (hpt).